A 717-amino-acid polypeptide reads, in one-letter code: Eukaryotic translation initiation factor 3 subunit B (717 aa).

The sufficient for interaction with HCR1 and TIF32 stretch occupies residues methionine 1–methionine 89. A sufficient for interaction with PIC8 region spans residues methionine 1–tryptophan 216. The RRM domain maps to serine 28–glutamate 115. WD repeat units lie at residues arginine 183–cysteine 221, phenylalanine 223–threonine 284, glycine 293–lysine 332, glutamate 445–threonine 484, phenylalanine 506–histidine 549, and serine 564–glutamate 609.

This sequence belongs to the eIF-3 subunit B family. Component of the eukaryotic translation initiation factor 3 (eIF-3) complex.

The protein resides in the cytoplasm. Functionally, RNA-binding component of the eukaryotic translation initiation factor 3 (eIF-3) complex, which is involved in protein synthesis of a specialized repertoire of mRNAs and, together with other initiation factors, stimulates binding of mRNA and methionyl-tRNAi to the 40S ribosome. The eIF-3 complex specifically targets and initiates translation of a subset of mRNAs involved in cell proliferation. In Yarrowia lipolytica (strain CLIB 122 / E 150) (Yeast), this protein is Eukaryotic translation initiation factor 3 subunit B.